Here is a 318-residue protein sequence, read N- to C-terminus: Acetyl-coenzyme A carboxylase carboxyl transferase subunit alpha (318 aa).

The 255-residue stretch at Ala38–Glu292 folds into the CoA carboxyltransferase C-terminal domain.

This sequence belongs to the AccA family. As to quaternary structure, acetyl-CoA carboxylase is a heterohexamer composed of biotin carboxyl carrier protein (AccB), biotin carboxylase (AccC) and two subunits each of ACCase subunit alpha (AccA) and ACCase subunit beta (AccD).

Its subcellular location is the cytoplasm. The enzyme catalyses N(6)-carboxybiotinyl-L-lysyl-[protein] + acetyl-CoA = N(6)-biotinyl-L-lysyl-[protein] + malonyl-CoA. The protein operates within lipid metabolism; malonyl-CoA biosynthesis; malonyl-CoA from acetyl-CoA: step 1/1. Its function is as follows. Component of the acetyl coenzyme A carboxylase (ACC) complex. First, biotin carboxylase catalyzes the carboxylation of biotin on its carrier protein (BCCP) and then the CO(2) group is transferred by the carboxyltransferase to acetyl-CoA to form malonyl-CoA. The chain is Acetyl-coenzyme A carboxylase carboxyl transferase subunit alpha from Paracoccus denitrificans (strain Pd 1222).